The following is a 712-amino-acid chain: MSPEAIPDPESMLAEQAHDALDPDLRRSWQELADEVREHQFRYYIRDAPIITDAEFDQLLRRLQALEDEYPELRTPDSPTQLVGGAGFATDFTAAEHLERMLSLDNVFDLEELAAWAARIRTEIGADAQYLCELKIDGVALALVYRDGRLERAATRGDGRTGEDVTLNARTIEDIPERLSGTNEFPLPTVVEVRGEVFFRVADFEDLNAGLVAEGKPPFANPRNSAAGSLRQKNPAVTARRRLRMICHGLGHVESSGGSPFPTLHDAYRALKAWGLPVSDHTAQVTGLDAVTERIAYWGEHRHDVEHEIDGVVVKVDAVALQRRLGATSRAPRWAVAYKYPPEEAQTRLLDIRVNVGRTGRVTPFAYMEPVKVAGSTVGLATLHNASEVKRKGVLIGDTVVIRKAGDVIPEVLGPVVDLRDGSEREFVFPTHCPECGSELAPAKEGDADIRCPNTRSCPAQLRERVFHVAGRGAFDIEGLGYEAATALLQAGVIADEGDLFGLTADDLLRTELFTTKAGELSANGKRLLANLGKAKAQPLWRVLVALSIRHVGPTAARALATEFGSLEAIETASEEQLAGTEGVGPTIAAAVIDWFTVDWHRAIVDKWREAGVRMADERDASIERTLEGLSIVVTGSLAGFSRDEAKEAIIARGGKAAGSVSKKTAYVVAGDAPGSKYDKAIELGVPVLDEDGFRRLLAEGPERDAEDGEPG.

NAD(+) contacts are provided by residues 53 to 57 (DAEFD), 103 to 104 (SL), and glutamate 133. The active-site N6-AMP-lysine intermediate is lysine 135. NAD(+) is bound by residues arginine 156, glutamate 196, lysine 315, and lysine 339. Positions 433, 436, 452, and 458 each coordinate Zn(2+). The 90-residue stretch at 622-711 (SIERTLEGLS…PERDAEDGEP (90 aa)) folds into the BRCT domain.

The protein belongs to the NAD-dependent DNA ligase family. LigA subfamily. Mg(2+) is required as a cofactor. Mn(2+) serves as cofactor.

It catalyses the reaction NAD(+) + (deoxyribonucleotide)n-3'-hydroxyl + 5'-phospho-(deoxyribonucleotide)m = (deoxyribonucleotide)n+m + AMP + beta-nicotinamide D-nucleotide.. Its function is as follows. DNA ligase that catalyzes the formation of phosphodiester linkages between 5'-phosphoryl and 3'-hydroxyl groups in double-stranded DNA using NAD as a coenzyme and as the energy source for the reaction. It is essential for DNA replication and repair of damaged DNA. The polypeptide is DNA ligase (Mycolicibacterium gilvum (strain PYR-GCK) (Mycobacterium gilvum (strain PYR-GCK))).